Here is an 81-residue protein sequence, read N- to C-terminus: RNA-binding protein Hfq (81 aa).

The 60-residue stretch at 9–68 folds into the Sm domain; the sequence is DPYLNILRKERVPVSIFLVNGIKLQGQIESFDQFVILLKNTVSQMVYKHAISTVVPSRTI.

It belongs to the Hfq family. As to quaternary structure, homohexamer.

Its function is as follows. RNA chaperone that binds small regulatory RNA (sRNAs) and mRNAs to facilitate mRNA translational regulation in response to envelope stress, environmental stress and changes in metabolite concentrations. Also binds with high specificity to tRNAs. The protein is RNA-binding protein Hfq of Marinomonas sp. (strain MWYL1).